A 382-amino-acid polypeptide reads, in one-letter code: Guanine nucleotide-binding protein G(s) subunit alpha (382 aa).

A compositionally biased stretch (polar residues) spans 1–14 (MGCFGSPTSKQSDV). The tract at residues 1–31 (MGCFGSPTSKQSDVNSEDSKSQKRRSDAISR) is disordered. G2 is lipidated: N-palmitoyl glycine. C3 carries the S-palmitoyl cysteine lipid modification. The span at 17-31 (EDSKSQKRRSDAISR) shows a compositional bias: basic and acidic residues. The region spanning 42 to 382 (ATHRLLLLGA…RMHLRQYELL (341 aa)) is the G-alpha domain. The tract at residues 45 to 58 (RLLLLGAGESGKST) is G1 motif. Residues 50–57 (GAGESGKS), 51–58 (AGESGKST), 186–192 (LRCRVLT), 211–215 (DVGGQ), 212–216 (VGGQR), 280–283 (NKQD), 281–284 (KQDL), and A354 each bind GTP. The Mg(2+) site is built by S57 and T192. The segment at 184–192 (DILRCRVLT) is G2 motif. Residues 207–216 (FHMFDVGGQR) are G3 motif. A G4 motif region spans residues 276-283 (ILFLNKQD). Positions 352–357 (TCAVDT) are G5 motif.

It belongs to the G-alpha family. G(s) subfamily. As to quaternary structure, g proteins are composed of 3 units; alpha, beta and gamma. The alpha chain contains the guanine nucleotide binding site.

Functionally, guanine nucleotide-binding proteins (G proteins) are involved as modulators or transducers in various transmembrane signaling systems. The G(s) protein is involved in hormonal regulation of adenylate cyclase: it activates the cyclase. The sequence is that of Guanine nucleotide-binding protein G(s) subunit alpha (G-salpha60A) from Drosophila pseudoobscura pseudoobscura (Fruit fly).